A 378-amino-acid polypeptide reads, in one-letter code: Cobalt-precorrin-5B C(1)-methyltransferase (378 aa).

It belongs to the CbiD family.

It catalyses the reaction Co-precorrin-5B + S-adenosyl-L-methionine = Co-precorrin-6A + S-adenosyl-L-homocysteine. It participates in cofactor biosynthesis; adenosylcobalamin biosynthesis; cob(II)yrinate a,c-diamide from sirohydrochlorin (anaerobic route): step 6/10. Its function is as follows. Catalyzes the methylation of C-1 in cobalt-precorrin-5B to form cobalt-precorrin-6A. This is Cobalt-precorrin-5B C(1)-methyltransferase from Tolumonas auensis (strain DSM 9187 / NBRC 110442 / TA 4).